We begin with the raw amino-acid sequence, 235 residues long: Protein CIST1 (235 aa).

The first 31 residues, 1–31 (MASSQPPLPPPPPPLLLLALLLLLKVSDTSS), serve as a signal peptide directing secretion. 2 stretches are compositionally biased toward low complexity: residues 28–61 (DTSS…SSPT) and 76–110 (STSH…SQPE). The tract at residues 28–159 (DTSSSVSTAT…TGPPSVSLAT (132 aa)) is disordered. The Extracellular portion of the chain corresponds to 32-184 (SVSTATSTAS…GVPRLHRNPG (153 aa)). The N-linked (GlcNAc...) asparagine glycan is linked to Asn-45. Positions 114–136 (HPSSGSPSSEHTVTSPSLGSVSL) are enriched in polar residues. Residues 185-205 (VVVAVCLLVSALLIGGAIMAV) traverse the membrane as a helical segment. The Cytoplasmic segment spans residues 206–235 (RRCHNGVSEFQKLDEGLVSRRSSSAHHTLP).

Highly expressed in large intestine, small intestine, rumen, and kidney tissues.

It is found in the membrane. The polypeptide is Protein CIST1 (CIST1) (Bos taurus (Bovine)).